The sequence spans 263 residues: Troponin T, slow skeletal muscle (263 aa).

The segment covering 1 to 38 (MSDAEEQEYEEEQPEEEEAAEEEEEAPEEPEPAAEPEE) has biased composition (acidic residues). 2 disordered regions span residues 1 to 64 (MSDA…RVDF) and 109 to 154 (AERA…KKKV). A Phosphoserine; by CK2 modification is found at serine 2. Over residues 44-56 (SRPVVPPLIPPKI) the composition is skewed to pro residues. Over residues 109–150 (AERAEQQRFRTEKERERQAKLAEEKMRKEEEEAKKRAEDDAK) the composition is skewed to basic and acidic residues.

It belongs to the troponin T family. As to quaternary structure, interacts with TPM3. In terms of tissue distribution, expressed dominantly in slow muscles, like masseter, diaphragm, psoas major and spinnalis. Isoform 2 is also expressed in fast muscles.

Functionally, troponin T is the tropomyosin-binding subunit of troponin, the thin filament regulatory complex which confers calcium-sensitivity to striated muscle actomyosin ATPase activity. The chain is Troponin T, slow skeletal muscle (TNNT1) from Bos taurus (Bovine).